The following is a 474-amino-acid chain: 2-succinylbenzoate--CoA ligase (474 aa).

Belongs to the ATP-dependent AMP-binding enzyme family. MenE subfamily.

It catalyses the reaction 2-succinylbenzoate + ATP + CoA = 2-succinylbenzoyl-CoA + AMP + diphosphate. It participates in quinol/quinone metabolism; 1,4-dihydroxy-2-naphthoate biosynthesis; 1,4-dihydroxy-2-naphthoate from chorismate: step 5/7. Its pathway is quinol/quinone metabolism; menaquinone biosynthesis. Functionally, converts 2-succinylbenzoate (OSB) to 2-succinylbenzoyl-CoA (OSB-CoA). The chain is 2-succinylbenzoate--CoA ligase from Staphylococcus epidermidis (strain ATCC 35984 / DSM 28319 / BCRC 17069 / CCUG 31568 / BM 3577 / RP62A).